The primary structure comprises 435 residues: MLDIKVIRENLDWAKEKLATRGIKPEQLDELVAIDAKRREAMVKCENLKAERNEVSKKIAAAKREKADASEAIANMREVGVKIKELDQEVDELQEKQEYILLRLPNFPADSDPIGPDESYNEEVRRWNEPTKFDYQPKAHWDLGTDLNILDWDAASKVSAARFVYYKGAGALLERAVYNFFLDENTSEGYTEVITPSLVNNDSMQGTGQFPKFTEDVYTIVDNDDPEVARNLTLIPTAEVPLVNYFRGDIIDGKNLPINVTALSPAFRSEAGSAGRDTRGLIRMHEFRKVEMVKVVKPEDSWKELENLTHNAEHLLQKLGLPYRVVALSTGDASFTSAKTYDLEVWMPAQDTYREISSCSNCTDFQARRAQIRYRDEDGKVKLTHTLNGSGLAVGRTVAAILENYQNEDGTVTVPEALRPYMHGMTKITPEVKWH.

L-serine is bound at residue 237-239; the sequence is TAE. Residue 268–270 coordinates ATP; sequence RSE. Residue Glu-291 participates in L-serine binding. 355–358 is a binding site for ATP; sequence EISS. Ser-390 serves as a coordination point for L-serine.

This sequence belongs to the class-II aminoacyl-tRNA synthetase family. Type-1 seryl-tRNA synthetase subfamily. As to quaternary structure, homodimer. The tRNA molecule binds across the dimer.

It is found in the cytoplasm. The catalysed reaction is tRNA(Ser) + L-serine + ATP = L-seryl-tRNA(Ser) + AMP + diphosphate + H(+). It carries out the reaction tRNA(Sec) + L-serine + ATP = L-seryl-tRNA(Sec) + AMP + diphosphate + H(+). The protein operates within aminoacyl-tRNA biosynthesis; selenocysteinyl-tRNA(Sec) biosynthesis; L-seryl-tRNA(Sec) from L-serine and tRNA(Sec): step 1/1. Its function is as follows. Catalyzes the attachment of serine to tRNA(Ser). Is also able to aminoacylate tRNA(Sec) with serine, to form the misacylated tRNA L-seryl-tRNA(Sec), which will be further converted into selenocysteinyl-tRNA(Sec). This chain is Serine--tRNA ligase, found in Lactobacillus delbrueckii subsp. bulgaricus (strain ATCC BAA-365 / Lb-18).